Reading from the N-terminus, the 678-residue chain is Penicillin-binding protein activator LpoA (678 aa).

The first 26 residues, 1–26 (MVPSTFSRLKAARCLPVVLAALIFAG), serve as a signal peptide directing secretion. C27 carries the N-palmitoyl cysteine lipid modification. A lipid anchor (S-diacylglycerol cysteine) is attached at C27. Residues 300–310 (AADVAEQPQPQ) are compositionally biased toward low complexity. 2 disordered regions span residues 300 to 340 (AADV…PVSA) and 496 to 528 (ALTG…DDQF). The span at 311-327 (TADSVASPAQASVSDLT) shows a compositional bias: polar residues. 2 stretches are compositionally biased toward low complexity: residues 330–340 (QPAAQPVPVSA) and 513–528 (TTNN…DDQF).

Belongs to the LpoA family. As to quaternary structure, interacts with PBP1a.

It localises to the cell outer membrane. In terms of biological role, regulator of peptidoglycan synthesis that is essential for the function of penicillin-binding protein 1A (PBP1a). This is Penicillin-binding protein activator LpoA from Shigella flexneri serotype X (strain 2002017).